Here is a 291-residue protein sequence, read N- to C-terminus: Pyridoxal 5'-phosphate synthase subunit PdxS (291 aa).

Residue D23 participates in D-ribose 5-phosphate binding. K80 acts as the Schiff-base intermediate with D-ribose 5-phosphate in catalysis. G152 is a D-ribose 5-phosphate binding site. R164 lines the D-glyceraldehyde 3-phosphate pocket. D-ribose 5-phosphate is bound by residues G213 and 234–235 (GS).

This sequence belongs to the PdxS/SNZ family. In the presence of PdxT, forms a dodecamer of heterodimers.

The enzyme catalyses aldehydo-D-ribose 5-phosphate + D-glyceraldehyde 3-phosphate + L-glutamine = pyridoxal 5'-phosphate + L-glutamate + phosphate + 3 H2O + H(+). It participates in cofactor biosynthesis; pyridoxal 5'-phosphate biosynthesis. In terms of biological role, catalyzes the formation of pyridoxal 5'-phosphate from ribose 5-phosphate (RBP), glyceraldehyde 3-phosphate (G3P) and ammonia. The ammonia is provided by the PdxT subunit. Can also use ribulose 5-phosphate and dihydroxyacetone phosphate as substrates, resulting from enzyme-catalyzed isomerization of RBP and G3P, respectively. This Bifidobacterium adolescentis (strain ATCC 15703 / DSM 20083 / NCTC 11814 / E194a) protein is Pyridoxal 5'-phosphate synthase subunit PdxS.